The primary structure comprises 449 residues: Exodeoxyribonuclease 7 large subunit (449 aa).

Belongs to the XseA family. Heterooligomer composed of large and small subunits.

The protein resides in the cytoplasm. It carries out the reaction Exonucleolytic cleavage in either 5'- to 3'- or 3'- to 5'-direction to yield nucleoside 5'-phosphates.. In terms of biological role, bidirectionally degrades single-stranded DNA into large acid-insoluble oligonucleotides, which are then degraded further into small acid-soluble oligonucleotides. This is Exodeoxyribonuclease 7 large subunit from Salmonella typhimurium (strain LT2 / SGSC1412 / ATCC 700720).